The chain runs to 262 residues: Proliferating cell nuclear antigen (262 aa).

A DNA-binding region spans residues 61-80; sequence RCDRNIAMGVNLNSMSKILK. Residue K164 forms a Glycyl lysine isopeptide (Lys-Gly) (interchain with G-Cter in ubiquitin) linkage.

The protein belongs to the PCNA family. In terms of assembly, homotrimer. Forms a complex with activator 1 heteropentamer in the presence of ATP. Component of the replisome complex. In terms of processing, monoubiquitinated by the UBE2B-RAD18 complex on Lys-164. Monoubiquitination at Lys-164 also takes place in undamaged proliferating cells, and is mediated by the DCX(DTL) complex, leading to enhance PCNA-dependent translesion DNA synthesis.

The protein resides in the nucleus. Its function is as follows. This protein is an auxiliary protein of DNA polymerase delta and is involved in the control of eukaryotic DNA replication by increasing the polymerase's processibility during elongation of the leading strand. This is Proliferating cell nuclear antigen (PCNA) from Coturnix japonica (Japanese quail).